The chain runs to 107 residues: Phosphoribosyl-ATP pyrophosphatase (107 aa).

Belongs to the PRA-PH family.

It localises to the cytoplasm. The catalysed reaction is 1-(5-phospho-beta-D-ribosyl)-ATP + H2O = 1-(5-phospho-beta-D-ribosyl)-5'-AMP + diphosphate + H(+). It participates in amino-acid biosynthesis; L-histidine biosynthesis; L-histidine from 5-phospho-alpha-D-ribose 1-diphosphate: step 2/9. The chain is Phosphoribosyl-ATP pyrophosphatase from Bacillus cereus (strain AH187).